The following is a 963-amino-acid chain: Thrombospondin-4 (963 aa).

Residues 1-26 form the signal peptide; the sequence is MPAPRAAAAAFLLLHLVLQPWQRTSA. Residues 29–194 form the Laminin G-like domain; that stretch reads TPQVFDLLPS…LEELKLVVRG (166 aa). Residues 138 to 140 carry the Cell attachment site motif; that stretch reads RGD. An EGF-like 1 domain is found at 288–327; that stretch reads PTRHCDSSPCFRGVRCTDTRDGFQCGPCPDGYTGNGITCS. 21 disulfide bridges follow: cysteine 292–cysteine 303, cysteine 297–cysteine 312, cysteine 315–cysteine 326, cysteine 332–cysteine 343, cysteine 337–cysteine 352, cysteine 355–cysteine 379, cysteine 385–cysteine 396, cysteine 390–cysteine 405, cysteine 408–cysteine 420, cysteine 426–cysteine 440, cysteine 434–cysteine 450, cysteine 452–cysteine 463, cysteine 479–cysteine 484, cysteine 489–cysteine 509, cysteine 525–cysteine 545, cysteine 548–cysteine 568, cysteine 584–cysteine 604, cysteine 607–cysteine 627, cysteine 645–cysteine 665, cysteine 685–cysteine 705, and cysteine 721–cysteine 942. The EGF-like 2; calcium-binding domain maps to 328 to 365; it reads DVDECKYHPCYPGVRCVNLAPGFRCDACPVGFTGPMVQ. An EGF-like 3; calcium-binding domain is found at 381-418; the sequence is DVDECQNGACVLNSICINTLGSYRCGPCKPGYTGDQTR. The EGF-like 4 domain occupies 422-464; it reads TERSCRNPEQNPCSVHAQCIEERQGDVTCVCGVGWAGDGYVCG. TSP type-3 repeat units follow at residues 465–497, 498–533, 534–556, 557–592, 593–615, 616–653, 654–693, and 694–729; these read KDVDIDSYPDEELPCSARNCKKDNCKYVPNSGQ, EDADRDGIGDACDEDADGDGILNEQDNCVLTHNIDQ, RNSDKDIFGDACDNCRMVLNNDQ, KDTDGDGRGDACDDDMDGDGIKNILDNCPRVPNRDQ, QDRDGDDVGDACDSCPDVSNPNQ, SDVDNDLVGDSCDTNQDSDGDGHQDSTDNCPTVINSSQ, LDTDKDGIGDECDDDDDNDGIPDLVPPGPDNCRLVPNPAQ, and EDSNNDGVGDICEADFDQDQVIDHIDVCPENAEITL. Positions 564–566 match the Cell attachment site motif; that stretch reads RGD. Residues 579–676 form a disordered region; it reads NILDNCPRVP…DDDDNDGIPD (98 aa). Residues asparagine 614 and asparagine 650 are each glycosylated (N-linked (GlcNAc...) asparagine). Positions 642–654 are enriched in polar residues; the sequence is TDNCPTVINSSQL. A compositionally biased stretch (acidic residues) spans 662-673; it reads GDECDDDDDNDG. In terms of domain architecture, TSP C-terminal spans 733-947; the sequence is RAYQTVVLDP…LKYRCNDTIP (215 aa). Asparagine 943 carries N-linked (GlcNAc...) asparagine glycosylation.

The protein belongs to the thrombospondin family. As to quaternary structure, homopentamer; disulfide-linked. Interacts with PTBP3. Interacts (via EGF-like 3; calcium-binding domain) with ATF6 and facilitates its processing, activation and nuclear translocation. Interacts with NOTCH1. In terms of tissue distribution, heart. Up-regulated in the heart in response to ischemic injury and pathology (at protein level). Astrocytes; expressed at high levels in subventricular zone (SVZ)-derived astrocytes and at low levels in cortical astrocytes. In response to peripheral nerve injury, significantly up-regulated in the dorsal spinal cord (at protein level).

The protein localises to the endoplasmic reticulum. The protein resides in the sarcoplasmic reticulum. It is found in the secreted. Its subcellular location is the extracellular space. It localises to the extracellular matrix. Its function is as follows. Adhesive glycoprotein that mediates cell-to-cell and cell-to-matrix interactions and is involved in various processes including cellular proliferation, migration, adhesion and attachment, inflammatory response to CNS injury, regulation of vascular inflammation and adaptive responses of the heart to pressure overload and in myocardial function and remodeling. Binds to structural extracellular matrix (ECM) proteins and modulates the ECM in response to tissue damage, contributing to cardioprotective and adaptive ECM remodeling. Plays a role in ER stress response, via its interaction with the activating transcription factor 6 alpha (ATF6) which produces adaptive ER stress response factors and protects myocardium from pressure overload. May contribute to spinal presynaptic hypersensitivity and neuropathic pain states after peripheral nerve injury. May play a role in regulating protective astrogenesis from the subventricular zone (SVZ) niche after injury in a NOTCH1-dependent manner. This Mus musculus (Mouse) protein is Thrombospondin-4 (Thbs4).